Reading from the N-terminus, the 459-residue chain is 5-hydroxytryptamine receptor 2C (459 aa).

The signal sequence occupies residues 1-32 (MVNLGTAVRSLLVHLIGLLVWQFDISISPVAA). At 33 to 56 (IVTDTFNSSDGGRLFQFPDGVQNW) the chain is on the extracellular side. The helical transmembrane segment at 57-81 (PALSIVVIIIMTIGGNILVIMAVSM) threads the bilayer. Over 82–87 (EKKLHN) the chain is Cytoplasmic. The helical transmembrane segment at 88 to 112 (ATNYFLMSLAIADMLVGLLVMPLSL) threads the bilayer. The Extracellular segment spans residues 113–129 (LAILYDYVWPLPRYLCP). Cys-128 and Cys-208 are disulfide-bonded. Residues 130–152 (VWISLDVLFSTASIMHLCAISLD) form a helical membrane-spanning segment. Residue Thr-140 participates in ergotamine binding. Residues 152–154 (DRY) carry the DRY motif; important for ligand-induced conformation changes motif. Residues 153 to 168 (RYVAIRNPIEHSRFNS) lie on the Cytoplasmic side of the membrane. The helical transmembrane segment at 169–190 (RTKAIMKIAIVWAISIGVSVPI) threads the bilayer. The Extracellular portion of the chain corresponds to 191–214 (PVIGLRDESKVFVNNTTCVLNDPN). N-linked (GlcNAc...) asparagine glycosylation is found at Asn-204 and Asn-205. Leu-210 is a binding site for ergotamine. Residues 215–237 (FVLIGSFVAFFIPLTIMVITYFL) traverse the membrane as a helical segment. At 238–312 (TIYVLRRQTL…AINNEKKASK (75 aa)) the chain is on the cytoplasmic side. The disordered stretch occupies residues 274-302 (DEEENAPNPNPDQKPRRKKKEKRPRGTMQ). Residues 288–298 (PRRKKKEKRPR) show a composition bias toward basic residues. A helical membrane pass occupies residues 313–337 (VLGIVFFVFLIMWCPFFITNILSVL). Cys-338 and Cys-342 form a disulfide bridge. Residues 338–348 (CGKACNQKLME) lie on the Extracellular side of the membrane. The helical transmembrane segment at 349–371 (KLLNVFVWIGYVCSGINPLVYTL) threads the bilayer. An NPxxY motif; important for ligand-induced conformation changes and signaling motif is present at residues 365-369 (NPLVY). The Cytoplasmic portion of the chain corresponds to 372 to 459 (FNKIYRRAFS…NVVSERISSV (88 aa)). The short motif at 457-459 (SSV) is the PDZ-binding element.

Belongs to the G-protein coupled receptor 1 family. As to quaternary structure, interacts with MPDZ. Interacts with ARRB2. Interacts with MPP3; this interaction stabilizes the receptor at the plasma membrane and prevents the desensitization of the HTR2C receptor-mediated calcium response. In terms of tissue distribution, detected in brain cortex, hypothalamus, brainstem and arcuate nucleus. Detected in the paraventricular nucleus of the hypothalamus.

The protein resides in the cell membrane. In terms of biological role, G-protein coupled receptor for 5-hydroxytryptamine (serotonin). Also functions as a receptor for various drugs and psychoactive substances, including ergot alkaloid derivatives, 1-2,5,-dimethoxy-4-iodophenyl-2-aminopropane (DOI) and lysergic acid diethylamide (LSD). Ligand binding causes a conformation change that triggers signaling via guanine nucleotide-binding proteins (G proteins) and modulates the activity of downstream effectors. HTR2C is coupled to G(q)/G(11) G alpha proteins and activates phospholipase C-beta, releasing diacylglycerol (DAG) and inositol 1,4,5-trisphosphate (IP3) second messengers that modulate the activity of phosphatidylinositol 3-kinase and promote the release of Ca(2+) ions from intracellular stores, respectively. Beta-arrestin family members inhibit signaling via G proteins and mediate activation of alternative signaling pathways. Regulates neuronal activity via the activation of short transient receptor potential calcium channels in the brain, and thereby modulates the activation of pro-opiomelanocortin neurons and the release of CRH that then regulates the release of corticosterone. Plays a role in the regulation of appetite and eating behavior, responses to anxiogenic stimuli and stress. Plays a role in insulin sensitivity and glucose homeostasis. The protein is 5-hydroxytryptamine receptor 2C of Mus musculus (Mouse).